The following is a 793-amino-acid chain: Putative glutamate--cysteine ligase 2-3 (793 aa).

The segment at 1-407 (MLASDPRKVG…RFWDRGDTAD (407 aa)) is carboxylate-amine ligase. The segment at 367–390 (TEHLPDVEVPPPREPGPKSTGAGR) is disordered. The tract at residues 408–793 (MTWTESTELD…ALTRLEDQSG (386 aa)) is peptidase M20.

The protein in the C-terminal section; belongs to the glutamate--cysteine ligase type 2 family. YbdK subfamily.

It carries out the reaction L-cysteine + L-glutamate + ATP = gamma-L-glutamyl-L-cysteine + ADP + phosphate + H(+). In terms of biological role, ATP-dependent carboxylate-amine ligase which exhibits weak glutamate--cysteine ligase activity. The chain is Putative glutamate--cysteine ligase 2-3 from Rhodococcus jostii (strain RHA1).